A 351-amino-acid chain; its full sequence is MLGSVKMEAHDLAEWSYYPEAGEVYSPVTPVPTMAPLNSYMTLNPLSSPYPPGGLPASPLPTGPLAPPAPTAPLGPTFPGLGASTGGGSSSGYGGPGPGLVHGKEMPKGYRRPLAHAKPPYSYISLITMAIQQAPGKMLTLSEIYQWIMDLFPYYRENQQRWQNSIRHSLSFNDCFVKVARSPDKPGKGSYWALHPSSGNMFENGCYLRRQKRFKLEEKVKKGGGGSSASRNSAGSASTATAPAATVASTPQPQPPPPEPEAQGGDEVGALDCGSPAAPSTPYFTGLELPGELKLDAPYNFNHPFSINNLMSEQSPAPPKLDVGFGGYGAEGGEPGVYYQGLYSRSLLNAS.

Positions 52–73 (PGGLPASPLPTGPLAPPAPTAP) are enriched in pro residues. The disordered stretch occupies residues 52 to 94 (PGGLPASPLPTGPLAPPAPTAPLGPTFPGLGASTGGGSSSGYG). Residues 83–94 (ASTGGGSSSGYG) show a composition bias toward gly residues. A DNA-binding region (fork-head) is located at residues 118-212 (KPPYSYISLI…ENGCYLRRQK (95 aa)). The segment at 218–275 (EKVKKGGGGSSASRNSAGSASTATAPAATVASTPQPQPPPPEPEAQGGDEVGALDCGS) is disordered. Over residues 228–251 (SASRNSAGSASTATAPAATVASTP) the composition is skewed to low complexity.

It localises to the nucleus. Functionally, transcription activator for a number of liver genes such as AFP, albumin, tyrosine aminotransferase, PEPCK, etc. Interacts with the cis-acting regulatory regions of these genes. This chain is Hepatocyte nuclear factor 3-gamma (FOXA3), found in Bos taurus (Bovine).